A 302-amino-acid chain; its full sequence is Nucleotide-binding protein Rsph17025_2562 (302 aa).

Residue 15-22 (GPSGAGRT) participates in ATP binding. 62-65 (DVRN) is a binding site for GTP.

The protein belongs to the RapZ-like family.

Its function is as follows. Displays ATPase and GTPase activities. The chain is Nucleotide-binding protein Rsph17025_2562 from Cereibacter sphaeroides (strain ATCC 17025 / ATH 2.4.3) (Rhodobacter sphaeroides).